Here is a 202-residue protein sequence, read N- to C-terminus: Snake venom metalloproteinase leucurolysin-A (202 aa).

Glutamine 1 is modified (pyrrolidone carboxylic acid). Positions arginine 6–proline 202 constitute a Peptidase M12B domain. Residues glutamate 9 and aspartate 93 each contribute to the Ca(2+) site. Disulfide bonds link cysteine 117–cysteine 197, cysteine 157–cysteine 181, and cysteine 159–cysteine 164. Residue histidine 142 participates in Zn(2+) binding. Residue glutamate 143 is part of the active site. Histidine 146 and histidine 152 together coordinate Zn(2+). Residues cysteine 197 and asparagine 200 each contribute to the Ca(2+) site.

Belongs to the venom metalloproteinase (M12B) family. P-I subfamily. As to quaternary structure, monomer. Zn(2+) serves as cofactor. Expressed by the venom gland.

The protein localises to the secreted. With respect to regulation, inhibited by EDTA and 2-mercaptoethanol. Inhibited by 1 mM zinc ion and to a lesser extent by 1 mM calcium ion. In terms of biological role, non-hemorrhagic metalloproteinase that hydrolyzes the alpha chains of fibrinogen, as well as fibrin, fibronectin and casein. Beta and gamma chains are also hydrolyzed, but more slowly. Thrombolytic activity is also observed. Induces detachment of endothelial cells followed by death, and inhibits endothelial cell adhesion to fibronectin. Induces edema in mouse paw. Inhibits ADP-induced platelet aggregation on human platelet-rich plasma with an IC(50) of 2.8 uM. This is Snake venom metalloproteinase leucurolysin-A from Bothrops leucurus (Whitetail lancehead).